Here is a 278-residue protein sequence, read N- to C-terminus: Fasciclin-like arabinogalactan protein 5 (278 aa).

The N-terminal stretch at 1–24 (MGLKASLSLLSLTILLVFSKVVTA) is a signal peptide. An FAS1 domain is found at 25–169 (NNITLAFQKY…LSIIQITMPI (145 aa)). N-linked (GlcNAc...) asparagine glycosylation is found at asparagine 26, asparagine 74, asparagine 126, and asparagine 159. Residues 199–257 (VVPAPGPAADDNSPDSAVPKTPPAPATDTPEADSPAPAPSADNEKIEAADKAKPSSSAS) form a disordered region. Low complexity predominate over residues 224-239 (ATDTPEADSPAPAPSA). Basic and acidic residues predominate over residues 240–251 (DNEKIEAADKAK). A lipid anchor (GPI-anchor amidated serine) is attached at serine 255. The propeptide at 256–278 (ASKAGWSFDVILLLAFLASFAGF) is removed in mature form.

This sequence belongs to the fasciclin-like AGP family.

It localises to the cell membrane. Functionally, may be a cell surface adhesion protein. This Arabidopsis thaliana (Mouse-ear cress) protein is Fasciclin-like arabinogalactan protein 5 (FLA5).